The sequence spans 269 residues: Regulatory protein RecX (269 aa).

The protein belongs to the RecX family.

The protein resides in the cytoplasm. Modulates RecA activity. This chain is Regulatory protein RecX, found in Listeria monocytogenes serotype 4a (strain HCC23).